Reading from the N-terminus, the 790-residue chain is Potassium transporter 22 (790 aa).

Residues 1-64 are Cytoplasmic-facing; that stretch reads MAQQQGQGAG…HGEGWARTLR (64 aa). Residues 65–85 form a helical membrane-spanning segment; it reads LAFQCFGVLYGDIGTSPLYVY. The Extracellular portion of the chain corresponds to 86 to 98; it reads STTFDGGIRHTDD. The helical transmembrane segment at 99 to 119 threads the bilayer; sequence LLGVLSLIIYSFLLFTIIKYV. The Cytoplasmic segment spans residues 120-198; the sequence is YIALRANDDG…DLLENSRPVR (79 aa). The helical transmembrane segment at 199-219 threads the bilayer; it reads ISLFLLTILATAMVISDACLT. Topologically, residues 220–236 are extracellular; the sequence is PAISVLSAVGGLKDKAP. Residues 237 to 257 traverse the membrane as a helical segment; the sequence is HLNTEQVVWVTVGILVMLFAV. Topologically, residues 258 to 264 are cytoplasmic; it reads QRFGTDK. The chain crosses the membrane as a helical span at residues 265–285; that stretch reads VGYLFAPVVLLWLLLIGGVGV. At 286-318 the chain is on the extracellular side; that stretch reads YNLAAHDVGVLRAFNPKYILDYFRRNGRHGWVS. Residues 319–339 traverse the membrane as a helical segment; it reads LGGVLLCFTGTEALFADLGCF. Residues 340–345 lie on the Cytoplasmic side of the membrane; sequence SIRSIQ. Residues 346–366 traverse the membrane as a helical segment; the sequence is LSFAFGLVPAVLLAYAGQAAY. The Extracellular segment spans residues 367 to 385; that stretch reads LRVYPDHVGDAFYASTPQV. Residues 386-406 traverse the membrane as a helical segment; the sequence is LFWPTLVLALAASVVGSQAMI. The Cytoplasmic portion of the chain corresponds to 407-437; that stretch reads SCAFATISHSQAMGCFPRVKVVHTSRQYQGQ. Residues 438-458 form a helical membrane-spanning segment; the sequence is VYIPEINLLLGAAACVVTVAA. The Extracellular portion of the chain corresponds to 459 to 469; sequence RDTVVIGEAHG. A helical membrane pass occupies residues 470 to 490; sequence ICVVLVMLITTLLLTVVMVLV. The Cytoplasmic portion of the chain corresponds to 491–492; sequence WR. Residues 493 to 513 form a helical membrane-spanning segment; sequence VNIGWVLVFACVFASTESVYL. Topologically, residues 514 to 519 are extracellular; it reads TSVLYK. A helical transmembrane segment spans residues 520–540; it reads FAHGGYIPVAMSAVLMGVMGV. Residues 541 to 790 lie on the Cytoplasmic side of the membrane; sequence WHYVHVRRYK…LLKVGMSYEI (250 aa).

The protein belongs to the HAK/KUP transporter (TC 2.A.72.3) family.

The protein localises to the membrane. In terms of biological role, high-affinity potassium transporter. The chain is Potassium transporter 22 (HAK22) from Oryza sativa subsp. japonica (Rice).